The sequence spans 941 residues: HMG box transcription factor BBX (941 aa).

The segment covering 1–18 has biased composition (basic and acidic residues); sequence MKGSNRNKDHSAEGEGVG. Disordered regions lie at residues 1 to 21, 39 to 80, 157 to 200, and 221 to 242; these read MKGS…GKRP, FSEE…EQRA, VKSP…FGMA, and TPEV…LRQK. Acidic residues-rich tracts occupy residues 39–52 and 63–75; these read FSEE…EEDI and LEQD…DDES. Positions 80–148 form a DNA-binding region, HMG box; that stretch reads ARRPMNAFLL…AFMKANPGYK (69 aa). Residues 177-191 show a composition bias toward basic and acidic residues; sequence SSRDLPSPKKAKTEE. Position 243 is a phosphoserine (serine 243). Residues 326 to 370 adopt a coiled-coil conformation; sequence GRIKELEKGKEEKEIKMEKTDETRLQKEAEFEKSAKENLRDSKEL. Residue lysine 385 forms a Glycyl lysine isopeptide (Lys-Gly) (interchain with G-Cter in SUMO2) linkage. The disordered stretch occupies residues 438 to 482; it reads IEDPAALNKPEKLKKKKKKSKMDRHGNDKSTPKKTCKKRQSSESD. A compositionally biased stretch (basic residues) spans 449 to 459; sequence KLKKKKKKSKM. Serine 478 and serine 485 each carry phosphoserine. 2 stretches are compositionally biased toward basic and acidic residues: residues 499 to 508 and 536 to 552; these read GIEKLGDTPR and KKMS…ESRP. Disordered regions lie at residues 499–600 and 635–677; these read GIEK…SDCH and NVDR…KKTK. A Glycyl lysine isopeptide (Lys-Gly) (interchain with G-Cter in SUMO2) cross-link involves residue lysine 573. Residues 661 to 670 show a composition bias toward low complexity; it reads TFSQSGTSGS. Residue lysine 696 forms a Glycyl lysine isopeptide (Lys-Gly) (interchain with G-Cter in SUMO2) linkage. Position 704 is a phosphoserine (serine 704). Disordered regions lie at residues 714 to 771, 803 to 888, and 912 to 941; these read PVPR…DKWS, IPSI…SSTP, and HRGQ…CADQ. Over residues 723-742 the composition is skewed to polar residues; it reads GNVSSEPTKTSKGPFQSQKK. The segment covering 743–757 has biased composition (basic residues); that stretch reads NLFHKIVSKYKHKKE. Residues 758 to 771 are compositionally biased toward basic and acidic residues; the sequence is KPNVPEKGSGDKWS. The span at 805 to 817 shows a compositional bias: polar residues; that stretch reads SIFNTPEPTTTQE. Phosphoserine is present on serine 822. The segment covering 823–834 has biased composition (basic residues); sequence QKRKARKTKITH. Serine 844 is modified (phosphoserine). Basic and acidic residues predominate over residues 866 to 882; that stretch reads TETDCNDKCSHNTEVGE.

It is found in the nucleus. Its function is as follows. Transcription factor that is necessary for cell cycle progression from G1 to S phase. In Homo sapiens (Human), this protein is HMG box transcription factor BBX (BBX).